The chain runs to 473 residues: Keratin, type I cytoskeletal 16 (473 aa).

A head region spans residues 1–116; sequence MTTCSRQFTS…AGGDGLLVGS (116 aa). A coil 1A region spans residues 117 to 152; it reads EKVTMQNLNDRLASYLDKVRALEEANADLEVKIRDW. An IF rod domain is found at 117–428; that stretch reads EKVTMQNLND…RLLEGEDAHL (312 aa). The interval 153–170 is linker 1; the sequence is YQRQRPSEIKDYSPYFKT. The interval 171-262 is coil 1B; the sequence is IEDLRNKIIA…KNHEEEMLAL (92 aa). The interval 263-285 is linker 12; sequence RGQTGGDVNVEMDAAPGVDLSRI. The tract at residues 286–424 is coil 2; it reads LNEMRDQYEQ…ATYRRLLEGE (139 aa). A tail region spans residues 425–473; the sequence is DAHLSSQQASGQSYSSREVFTSSSSSSSRQTRPILKEQSSSSFSQGQSS. The segment at 428–473 is disordered; sequence LSSQQASGQSYSSREVFTSSSSSSSRQTRPILKEQSSSSFSQGQSS. Low complexity-rich tracts occupy residues 429 to 452 and 462 to 473; these read SSQQ…SSSS and QSSSSFSQGQSS.

Belongs to the intermediate filament family. As to quaternary structure, heterodimer of a type I and a type II keratin. KRT16 associates with KRT6 isomers (KRT6A or KRT6B). Interacts with TCHP. Interacts with TRADD. As to expression, expressed in the corneal epithelium (at protein level).

Functionally, epidermis-specific type I keratin that plays a key role in skin. Acts as a regulator of innate immunity in response to skin barrier breach: required for some inflammatory checkpoint for the skin barrier maintenance. The polypeptide is Keratin, type I cytoskeletal 16 (KRT16) (Homo sapiens (Human)).